The chain runs to 697 residues: tRNA 5-methylaminomethyl-2-thiouridine biosynthesis bifunctional protein MnmC (697 aa).

The segment at 1–269 (MNKTPLLSVS…LRQQLQQQFA (269 aa)) is tRNA (mnm(5)s(2)U34)-methyltransferase. Residues 287–697 (IGGGIASASL…RKLLKGKALM (411 aa)) are FAD-dependent cmnm(5)s(2)U34 oxidoreductase.

It in the N-terminal section; belongs to the methyltransferase superfamily. tRNA (mnm(5)s(2)U34)-methyltransferase family. This sequence in the C-terminal section; belongs to the DAO family. FAD is required as a cofactor.

The protein localises to the cytoplasm. It carries out the reaction 5-aminomethyl-2-thiouridine(34) in tRNA + S-adenosyl-L-methionine = 5-methylaminomethyl-2-thiouridine(34) in tRNA + S-adenosyl-L-homocysteine + H(+). Its function is as follows. Catalyzes the last two steps in the biosynthesis of 5-methylaminomethyl-2-thiouridine (mnm(5)s(2)U) at the wobble position (U34) in tRNA. Catalyzes the FAD-dependent demodification of cmnm(5)s(2)U34 to nm(5)s(2)U34, followed by the transfer of a methyl group from S-adenosyl-L-methionine to nm(5)s(2)U34, to form mnm(5)s(2)U34. In Shewanella frigidimarina (strain NCIMB 400), this protein is tRNA 5-methylaminomethyl-2-thiouridine biosynthesis bifunctional protein MnmC.